The sequence spans 147 residues: uncharacterized protein (147 aa).

This is an uncharacterized protein from Human cytomegalovirus (strain AD169) (HHV-5).